Reading from the N-terminus, the 1139-residue chain is Retinoblastoma-like protein 2 (1139 aa).

The tract at residues 1 to 45 is disordered; it reads MPSGGDQSPPPPPPPPAAAASDEEEEDDGEAEDAAPPAESPTPQI. Residues 8 to 17 are compositionally biased toward pro residues; that stretch reads SPPPPPPPPA. The span at 21–33 shows a compositional bias: acidic residues; the sequence is SDEEEEDDGEAED. Phosphoserine is present on Ser413. Thr417 carries the phosphothreonine modification. Residues 417-616 form a domain A region; the sequence is TPVSTATHSL…EKIRDNENRV (200 aa). Residues 417–1024 are pocket; binds E1A; that stretch reads TPVSTATHSL…KQIKTFAMKY (608 aa). O-linked (GlcNAc) serine glycosylation is present at Ser420. Residues 617-827 are spacer; the sequence is PTCEEVMPPQ…KQGQSVTSSS (211 aa). At Ser639 the chain carries Phosphoserine. A Phosphothreonine modification is found at Thr642. The disordered stretch occupies residues 654-678; sequence GGLGRSITSPTTLYDRYSSPPASTT. Ser662, Ser672, and Ser688 each carry phosphoserine. Over residues 810 to 827 the composition is skewed to low complexity; that stretch reads ISPGGQQQKQGQSVTSSS. 2 disordered regions span residues 810–831 and 933–999; these read ISPGGQQQKQGQSVTSSSNRPR and KGKR…DMEE. Residues 828-1024 form a domain B region; the sequence is NRPRKTSSLS…KQIKTFAMKY (197 aa). The segment covering 941-955 has biased composition (polar residues); sequence SGSSDSRSHQNSPTE. Ser948, Ser952, Ser966, Ser971, Ser972, and Ser973 each carry phosphoserine. Over residues 964–973 the composition is skewed to low complexity; it reads DSSPVMRSSS. A Phosphothreonine modification is found at Thr974. A compositionally biased stretch (pro residues) spans 977 to 987; sequence VPQPSSAPPTP. Ser981 and Ser982 each carry phosphoserine. Position 986 is a phosphothreonine (Thr986). 4 positions are modified to phosphoserine: Ser1035, Ser1068, Ser1080, and Ser1112.

This sequence belongs to the retinoblastoma protein (RB) family. As to quaternary structure, interacts with AATF. Interacts with KMT5B, KMT5C and USP4. Component of the DREAM complex (also named LINC complex) at least composed of E2F4, E2F5, LIN9, LIN37, LIN52, LIN54, MYBL1, MYBL2, RBL1, RBL2, RBBP4, TFDP1 and TFDP2. The complex exists in quiescent cells where it represses cell cycle-dependent genes. It dissociates in S phase when LIN9, LIN37, LIN52 and LIN54 form a subcomplex that binds to MYBL2. Interacts with RINT1. Interacts with PML (isoform PML-1, isoform PML-2, isoform PML-3, isoform PML-4 and isoform PML-5). Interacts with RBBP9. Interacts with CD53. (Microbial infection) Interacts with JC virus small t antigen. Post-translationally, during G0 and early G1 phase of the cell cycle, phosphorylated on Ser-639 and on 5 sites within the domain B. Phosphorylation on Ser-672 in G1 leads to its ubiquitin-dependent proteolysis.

Its subcellular location is the nucleus. In terms of biological role, key regulator of entry into cell division. Directly involved in heterochromatin formation by maintaining overall chromatin structure and, in particular, that of constitutive heterochromatin by stabilizing histone methylation. Recruits and targets histone methyltransferases KMT5B and KMT5C, leading to epigenetic transcriptional repression. Controls histone H4 'Lys-20' trimethylation. Probably acts as a transcription repressor by recruiting chromatin-modifying enzymes to promoters. Potent inhibitor of E2F-mediated trans-activation, associates preferentially with E2F5. Binds to cyclins A and E. Binds to and may be involved in the transforming capacity of the adenovirus E1A protein. May act as a tumor suppressor. The protein is Retinoblastoma-like protein 2 (RBL2) of Homo sapiens (Human).